The chain runs to 282 residues: DNA processing protein DprA (282 aa).

This sequence belongs to the DprA/Smf family. As to quaternary structure, homodimer; forms tail-to-tail dimers, forms nucleoprotein complex (NPC) which requires at least 30 nucleotides (nt) of ssDNA becoming optimal with 50 nt. Interacts with RecA, forms mixed DprA-RecA-ssDNA filaments. Interacts with ComFA and ComFC.

Its subcellular location is the cytoplasm. Protein that helps load RecA onto ssDNA during transformation. Required for DNA transformation. Not required for DNA uptake but for a later stage of transformation. Thought to interact at the cell pole with newly imported transforming ssDNA which it binds cooperatively, protecting linear and circular ssDNA from nuclease action. Forms bridges between DNA segments. Favors the loading of RecA onto ssDNA and formation of RecA-DNA filaments, triggering RecA-catalysis of ATP-driven homologous DNA pairing. The chain is DNA processing protein DprA from Streptococcus pneumoniae (strain ATCC BAA-255 / R6).